The following is a 607-amino-acid chain: DNA mismatch repair protein MutL (607 aa).

It belongs to the DNA mismatch repair MutL/HexB family.

Its function is as follows. This protein is involved in the repair of mismatches in DNA. It is required for dam-dependent methyl-directed DNA mismatch repair. May act as a 'molecular matchmaker', a protein that promotes the formation of a stable complex between two or more DNA-binding proteins in an ATP-dependent manner without itself being part of a final effector complex. In Paramagnetospirillum magneticum (strain ATCC 700264 / AMB-1) (Magnetospirillum magneticum), this protein is DNA mismatch repair protein MutL.